The sequence spans 673 residues: MADLRKIKIDDTIIEVDPNMTLIQACEMAGIEVPRFCYHERLSIAGNCRMCLVEVVGGPPKPAASCAMQVKDLRPGPEGAPSEIRTNSPMVKKAREGVMEFLLINHPLDCPICDQGGECDLQDQAMAYGVDFSRYREPKRATEDLNLGPLVETHMTRCISCTRCVRFTTEVAGITQMGQTGRGEDSEITSYLNQTLESNMQGNIIDLCPVGALVSKPYAFTARPWELTKTESIDVMDALGSSIRIDTKGREVMRILPRNHDGVNEEWISDKTRFVWDGLRRQRLDRPYIRENGRLRPASWPEALEAAARAMKGKKIAGLIGDLVPAEAAFSLKQLVEGLGGKVECRVDGARLPAGNRSAYVGTARIEDIDDAEMIQLIGTNPRDEAPVLNARIRKAWSKGAKVGLVGEPVDLTYDYAHVGTDRAALESLSSREISDETKARPSIVIVGQGAIARRDGEAVLAHAMKLAENSNSGLLILHTAAGRVGAMDVGAVTEGGLLAAIDGAEVVYNLGADEVDIDQGPFVIYQGSHGDRGAHRDIILPGACYTEESGLFVNTEGRPQLAMRANFAPGEGKENWAILRALSAELGATQPWDSLAGLRRKLVEAVPHLAQIDQVPQNEWQPLGRFDLGQASFRYAIRDFYLTNPIARSSPLMGELSAMAAARKAPAPLAAE.

Positions 5–90 (RKIKIDDTII…PSEIRTNSPM (86 aa)) constitute a 2Fe-2S ferredoxin-type domain. Residues Cys-37, Cys-48, Cys-51, and Cys-66 each contribute to the [2Fe-2S] cluster site. A 4Fe-4S His(Cys)3-ligated-type domain is found at 90 to 129 (MVKKAREGVMEFLLINHPLDCPICDQGGECDLQDQAMAYG). 8 residues coordinate [4Fe-4S] cluster: His-106, Cys-110, Cys-113, Cys-119, Cys-158, Cys-161, Cys-164, and Cys-208. The 4Fe-4S Mo/W bis-MGD-type domain occupies 227 to 283 (LTKTESIDVMDALGSSIRIDTKGREVMRILPRNHDGVNEEWISDKTRFVWDGLRRQR).

This sequence belongs to the complex I 75 kDa subunit family. As to quaternary structure, NDH-1 is composed of at least 14 different subunits, Nqo1 to Nqo14. The complex has a L-shaped structure, with the hydrophobic arm (subunits Nqo7, Nqo8, Nqo10 to Nqo14) embedded in the inner membrane and the hydrophilic peripheral arm (subunits Nqo1 to Nqo6, Nqo9) protruding into the bacterial cytoplasm. The hydrophilic domain contains all the redox centers. [2Fe-2S] cluster is required as a cofactor. [4Fe-4S] cluster serves as cofactor.

It is found in the cell inner membrane. The enzyme catalyses a quinone + NADH + 5 H(+)(in) = a quinol + NAD(+) + 4 H(+)(out). In terms of biological role, NDH-1 shuttles electrons from NADH, via FMN and iron-sulfur (Fe-S) centers, to quinones in the respiratory chain. The immediate electron acceptor for the enzyme in this species is believed to be ubiquinone. Couples the redox reaction to proton translocation (for every two electrons transferred, four hydrogen ions are translocated across the cytoplasmic membrane), and thus conserves the redox energy in a proton gradient. The chain is NADH-quinone oxidoreductase chain 3 from Paracoccus denitrificans.